The chain runs to 267 residues: MDTAIDLSDASKALDLANIRFQLIRLEDTITFHLIERVQFPLNKTIYIPGGVKIPNEQISLMDYLLRETERLQSRVRRYQSPDEYPFFPSALEKPILQPLDYPKILHDNDVNVNETIKTRYVQDILPAICPQFGGREDRGETQENYGSAATCDVSCLQALSRRIHFGKFVAESKFQKETEKFVALIKAGDRKEIDEAITDAKVEQKVLERLALKAKTYGTDPGFPEQSGPKIDVQAVQDMYKEYVIPLTKVVEVEYLMQRLKGTQWE.

The 256-residue stretch at 7 to 262 folds into the Chorismate mutase domain; sequence LSDASKALDL…EVEYLMQRLK (256 aa). L-tyrosine-binding residues include arginine 77, arginine 78, asparagine 145, glycine 147, serine 148, and threonine 151. Asparagine 145, glycine 147, and serine 148 together coordinate L-tryptophan.

As to quaternary structure, homodimer.

It localises to the cytoplasm. It catalyses the reaction chorismate = prephenate. It functions in the pathway metabolic intermediate biosynthesis; prephenate biosynthesis; prephenate from chorismate: step 1/1. Its activity is regulated as follows. Each dimer has two allosteric binding sites that can bind the regulatory effectors tryptophan or tyrosine. Can bind either one tryptophan or one tyrosine, two tryptophan or two tyrosine or one tryptophan and one tyrosine, which differentially affect the catalytic activity. Activated by tryptophan and subject to feedback inhibition by tyrosine. In the presence of both tryptophan and tyrosine, the enzyme is in the activated state. Functionally, catalyzes the Claisen rearrangement of chorismate to prephenate. Acts at the first branch point in the aromatic amino acid pathway where it steers biosynthesis towards phenylalanine and tyrosine, and away from tryptophan. The sequence is that of Chorismate mutase from Emericella nidulans (strain FGSC A4 / ATCC 38163 / CBS 112.46 / NRRL 194 / M139) (Aspergillus nidulans).